A 428-amino-acid chain; its full sequence is 3-phosphoshikimate 1-carboxyvinyltransferase (428 aa).

Lysine 19, serine 20, and arginine 24 together coordinate 3-phosphoshikimate. A phosphoenolpyruvate-binding site is contributed by lysine 19. Residues glycine 91 and arginine 119 each coordinate phosphoenolpyruvate. Serine 164, glutamine 166, aspartate 312, and lysine 339 together coordinate 3-phosphoshikimate. Glutamine 166 serves as a coordination point for phosphoenolpyruvate. The Proton acceptor role is filled by aspartate 312. Residues arginine 343 and arginine 386 each coordinate phosphoenolpyruvate.

Belongs to the EPSP synthase family. As to quaternary structure, monomer.

It localises to the cytoplasm. The catalysed reaction is 3-phosphoshikimate + phosphoenolpyruvate = 5-O-(1-carboxyvinyl)-3-phosphoshikimate + phosphate. Its pathway is metabolic intermediate biosynthesis; chorismate biosynthesis; chorismate from D-erythrose 4-phosphate and phosphoenolpyruvate: step 6/7. Catalyzes the transfer of the enolpyruvyl moiety of phosphoenolpyruvate (PEP) to the 5-hydroxyl of shikimate-3-phosphate (S3P) to produce enolpyruvyl shikimate-3-phosphate and inorganic phosphate. The polypeptide is 3-phosphoshikimate 1-carboxyvinyltransferase (Bacillus velezensis (strain DSM 23117 / BGSC 10A6 / LMG 26770 / FZB42) (Bacillus amyloliquefaciens subsp. plantarum)).